Reading from the N-terminus, the 266-residue chain is Methyl-coenzyme M reductase II subunit gamma (266 aa).

Arg-123 provides a ligand contact to coenzyme M.

Belongs to the methyl-coenzyme M reductase gamma subunit family. MCR is a hexamer of two alpha, two beta, and two gamma chains, forming a dimer of heterotrimers. Requires coenzyme F430 as cofactor.

The enzyme catalyses coenzyme B + methyl-coenzyme M = methane + coenzyme M-coenzyme B heterodisulfide. Its pathway is one-carbon metabolism; methyl-coenzyme M reduction; methane from methyl-coenzyme M: step 1/1. Its function is as follows. Component of the methyl-coenzyme M reductase (MCR) I that catalyzes the reductive cleavage of methyl-coenzyme M (CoM-S-CH3 or 2-(methylthio)ethanesulfonate) using coenzyme B (CoB or 7-mercaptoheptanoylthreonine phosphate) as reductant which results in the production of methane and the mixed heterodisulfide of CoB and CoM (CoM-S-S-CoB). This is the final step in methanogenesis. This chain is Methyl-coenzyme M reductase II subunit gamma (mrtG), found in Methanocaldococcus jannaschii (strain ATCC 43067 / DSM 2661 / JAL-1 / JCM 10045 / NBRC 100440) (Methanococcus jannaschii).